Consider the following 252-residue polypeptide: uncharacterized protein (252 aa).

Residues 96 to 238 form the Clp R domain; sequence FRRFTPRARN…ITTLASLTGA (143 aa). Repeat stretches follow at residues 99–164 and 172–238; these read FTPR…PAVT and FSGP…LTGA.

Belongs to the ClpA/ClpB family. ClpC subfamily.

This is an uncharacterized protein from Mycobacterium bovis (strain ATCC BAA-935 / AF2122/97).